A 750-amino-acid polypeptide reads, in one-letter code: Photosystem I P700 chlorophyll a apoprotein A1 (750 aa).

8 helical membrane-spanning segments follow: residues 70–93, 156–179, 195–219, 291–309, 346–369, 385–411, 433–455, and 531–549; these read VFSAHFGQLSIIFLWLSGMYFHGA, LYCTAIGALIFASLMLFAGWFHYH, LNHHLAGLLGLGSLSWAGHQIHVSL, IAHHHLAIAILFLIAGHMY, WHAQLSLNLAMLGSTTIVVAHHMY, LSLFTHHMWIGGFLIVGAAAHAAIFMV, AIISHLNWVCIFLGFHSFGLYIH, and FLVHHIHAFTIHVTVLILL. Positions 573 and 582 each coordinate [4Fe-4S] cluster. Helical transmembrane passes span 589-610 and 664-686; these read HVFLGLFWMYNSISVVIFHFSW and LSAYGLFFLGAHFVWAFSLMFLF. H675 is a chlorophyll a' binding site. 2 residues coordinate chlorophyll a: M683 and Y691. W692 lines the phylloquinone pocket. Residues 724 to 744 form a helical membrane-spanning segment; the sequence is AVGVTHYLLGGIATTWAFFLA.

This sequence belongs to the PsaA/PsaB family. In terms of assembly, the PsaA/B heterodimer binds the P700 chlorophyll special pair and subsequent electron acceptors. PSI consists of a core antenna complex that captures photons, and an electron transfer chain that converts photonic excitation into a charge separation. The eukaryotic PSI reaction center is composed of at least 11 subunits. P700 is a chlorophyll a/chlorophyll a' dimer, A0 is one or more chlorophyll a, A1 is one or both phylloquinones and FX is a shared 4Fe-4S iron-sulfur center. serves as cofactor.

It is found in the plastid. The protein resides in the chloroplast thylakoid membrane. The enzyme catalyses reduced [plastocyanin] + hnu + oxidized [2Fe-2S]-[ferredoxin] = oxidized [plastocyanin] + reduced [2Fe-2S]-[ferredoxin]. PsaA and PsaB bind P700, the primary electron donor of photosystem I (PSI), as well as the electron acceptors A0, A1 and FX. PSI is a plastocyanin-ferredoxin oxidoreductase, converting photonic excitation into a charge separation, which transfers an electron from the donor P700 chlorophyll pair to the spectroscopically characterized acceptors A0, A1, FX, FA and FB in turn. Oxidized P700 is reduced on the lumenal side of the thylakoid membrane by plastocyanin. This chain is Photosystem I P700 chlorophyll a apoprotein A1, found in Saccharum hybrid (Sugarcane).